Reading from the N-terminus, the 175-residue chain is Colicin-B immunity protein (175 aa).

3 consecutive transmembrane segments (helical) span residues 14–32, 104–121, and 149–168; these read ILYA…ILIL, CFWG…TLFY, and IYFT…LLVI.

The protein resides in the cell inner membrane. Its function is as follows. This protein is able to protect a cell, which harbors the plasmid ColB encoding colicin B, against colicin B. This chain is Colicin-B immunity protein (cbi), found in Escherichia coli.